The sequence spans 140 residues: Pro-vaccinia growth factor (140 aa).

Residues methionine 1–phenylalanine 18 form the signal peptide. At alanine 19 to tyrosine 100 the chain is on the extracellular side. An N-linked (GlcNAc...) asparagine; by host glycan is attached at asparagine 34. An EGF-like domain is found at alanine 41 to glutamine 81. 3 disulfide bridges follow: cysteine 45/cysteine 58, cysteine 53/cysteine 69, and cysteine 71/cysteine 80. N-linked (GlcNAc...) asparagine; by host glycosylation occurs at asparagine 95. A helical transmembrane segment spans residues isoleucine 101 to leucine 121. Topologically, residues serine 122–proline 140 are cytoplasmic.

This sequence belongs to the orthopoxvirus OPG019 family. In terms of assembly, vaccinia growth factor interacts with host EGFR and promotes EGFR dimerization.

It is found in the host membrane. The protein resides in the secreted. In terms of biological role, stimulates cellular proliferation (hyperplasia)and mobility around infected cells to promote rapid and efficient spread of infection. This effect is beneficial for virus replication in vivo, because poxviruses replicate possibly better in proliferating cells than in quiescent cells. Acts by binding host EGFR, inducing its dimerization, autophosphorylation and leading to activation of several cellular pathways regulating cell proliferation or cell survival. The activation by host EGFR of mitogen activated protein kinases (MAPK) and extracellular-signal regulated kinases (ERK) are essential for the positive effect of vaccinia growth factor on poxvirus virulence in vivo. The chain is Pro-vaccinia growth factor (OPG019) from Homo sapiens (Human).